Reading from the N-terminus, the 615-residue chain is Zinc metalloproteinase-disintegrin-like (615 aa).

The N-terminal stretch at 1–20 is a signal peptide; sequence MIQALLVTICLVGFPHQGSS. Positions 21 to 195 are excised as a propeptide; sequence IILESGNVKD…KMNFQSANNP (175 aa). The 197-residue stretch at 204–400 folds into the Peptidase M12B domain; sequence KYIKLAVVVD…DLPQCILNKP (197 aa). Cystine bridges form between cysteine 315–cysteine 395, cysteine 355–cysteine 379, and cysteine 357–cysteine 362. Residue histidine 340 participates in Zn(2+) binding. Glutamate 341 is a catalytic residue. Zn(2+)-binding residues include histidine 344 and histidine 350. The region spanning 408-494 is the Disintegrin domain; sequence PAVCGNNFVE…DCPMDGLQRN (87 aa). Residues valine 410, asparagine 413, phenylalanine 415, glutamate 417, and aspartate 423 each coordinate Ca(2+). 14 disulfide bridges follow: cysteine 411/cysteine 440, cysteine 422/cysteine 435, cysteine 424/cysteine 430, cysteine 434/cysteine 457, cysteine 448/cysteine 454, cysteine 453/cysteine 479, cysteine 466/cysteine 486, cysteine 473/cysteine 505, cysteine 498/cysteine 510, cysteine 517/cysteine 567, cysteine 532/cysteine 576, cysteine 545/cysteine 555, cysteine 562/cysteine 602, and cysteine 596/cysteine 608. A D/ECD-tripeptide motif is present at residues 472–474; that stretch reads DCD.

The protein belongs to the venom metalloproteinase (M12B) family. P-III subfamily. P-IIIa sub-subfamily. In terms of assembly, monomer. Zn(2+) serves as cofactor. As to expression, expressed by the venom gland.

The protein localises to the secreted. Functionally, snake venom zinc metalloprotease that may induce platelet aggregation. The sequence is that of Zinc metalloproteinase-disintegrin-like from Cerberus rynchops (Dog-faced water snake).